The following is a 96-amino-acid chain: Cysteine protease immunity 1 (96 aa).

This chain is Cysteine protease immunity 1, found in Escherichia coli O1:K1:H7 (strain ATCC 11775 / DSM 30083 / JCM 1649 / NBRC 102203 / NCTC 9001 / U5/41).